Here is a 1796-residue protein sequence, read N- to C-terminus: Y' element ATP-dependent helicase protein 1 copy 5 (1796 aa).

Residues 743–767 form a disordered region; the sequence is AGEAASSDHDQKISRVTRKRPREPK. The 178-residue stretch at 797–974 folds into the Helicase ATP-binding domain; that stretch reads EIYMADTPSV…LQRIGLTGLA (178 aa). Residue 810-817 coordinates ATP; the sequence is APPGYGKT. Residues 1031–1180 enclose the Helicase C-terminal domain; sequence KLLLALFEIE…EFYGLESKKG (150 aa). Disordered regions lie at residues 1254–1278 and 1294–1421; these read ANASTNATTNSSTNATTTASTNVRT and TTES…DINK. A compositionally biased stretch (low complexity) spans 1294–1397; that stretch reads TTESTNSSTN…ATTTESTNAS (104 aa). Positions 1398–1421 are enriched in basic and acidic residues; that stretch reads AKEDANKDGNAEDNRFHPVTDINK.

It belongs to the helicase family. Yeast subtelomeric Y' repeat subfamily.

Its function is as follows. Catalyzes DNA unwinding and is involved in telomerase-independent telomere maintenance. The polypeptide is Y' element ATP-dependent helicase protein 1 copy 5 (YRF1-5) (Saccharomyces cerevisiae (strain ATCC 204508 / S288c) (Baker's yeast)).